Consider the following 233-residue polypeptide: Adenosine 5'-phosphosulfate reductase 1 (233 aa).

Positions 120, 121, 203, and 206 each coordinate [4Fe-4S] cluster. The active-site Nucleophile; cysteine thiosulfonate intermediate is Cys-229.

The protein belongs to the PAPS reductase family. CysH subfamily. Requires [4Fe-4S] cluster as cofactor.

The protein localises to the cytoplasm. It carries out the reaction [thioredoxin]-disulfide + sulfite + AMP + 2 H(+) = adenosine 5'-phosphosulfate + [thioredoxin]-dithiol. Its pathway is sulfur metabolism; hydrogen sulfide biosynthesis; sulfite from sulfate. Its function is as follows. Catalyzes the formation of sulfite from adenosine 5'-phosphosulfate (APS) using thioredoxin as an electron donor. The sequence is that of Adenosine 5'-phosphosulfate reductase 1 (cysH) from Bacillus subtilis (strain 168).